The primary structure comprises 218 residues: 7-cyano-7-deazaguanine synthase (218 aa).

10–20 lines the ATP pocket; the sequence is FSGGQDSTTCL. Zn(2+) contacts are provided by C186, C195, C198, and C201.

It belongs to the QueC family. Homodimer. Zn(2+) serves as cofactor.

The enzyme catalyses 7-carboxy-7-deazaguanine + NH4(+) + ATP = 7-cyano-7-deazaguanine + ADP + phosphate + H2O + H(+). The protein operates within purine metabolism; 7-cyano-7-deazaguanine biosynthesis. Catalyzes the ATP-dependent conversion of 7-carboxy-7-deazaguanine (CDG) to 7-cyano-7-deazaguanine (preQ(0)). The chain is 7-cyano-7-deazaguanine synthase from Exiguobacterium sibiricum (strain DSM 17290 / CCUG 55495 / CIP 109462 / JCM 13490 / 255-15).